Here is a 519-residue protein sequence, read N- to C-terminus: Arabinose import ATP-binding protein AraG 2 (519 aa).

ABC transporter domains are found at residues 29–264 (LSLD…MVGR) and 264–515 (RSIE…LIKL). 61-68 (GENGAGKS) is a binding site for ATP.

It belongs to the ABC transporter superfamily. Arabinose importer (TC 3.A.1.2.2) family. In terms of assembly, the complex is composed of two ATP-binding proteins (AraG), two transmembrane proteins (AraH) and a solute-binding protein (AraF).

The protein resides in the cell inner membrane. It catalyses the reaction L-arabinose(out) + ATP + H2O = L-arabinose(in) + ADP + phosphate + H(+). Its function is as follows. Part of the ABC transporter complex AraFGH involved in arabinose import. Responsible for energy coupling to the transport system. This chain is Arabinose import ATP-binding protein AraG 2, found in Burkholderia ambifaria (strain ATCC BAA-244 / DSM 16087 / CCUG 44356 / LMG 19182 / AMMD) (Burkholderia cepacia (strain AMMD)).